The primary structure comprises 302 residues: Sulfate adenylyltransferase subunit 2 (302 aa).

Positions 280-302 (RQGRVIDHDQAGSMEQKKREGYF) are disordered.

Belongs to the PAPS reductase family. CysD subfamily. As to quaternary structure, heterodimer composed of CysD, the smaller subunit, and CysN.

It carries out the reaction sulfate + ATP + H(+) = adenosine 5'-phosphosulfate + diphosphate. It functions in the pathway sulfur metabolism; hydrogen sulfide biosynthesis; sulfite from sulfate: step 1/3. With CysN forms the ATP sulfurylase (ATPS) that catalyzes the adenylation of sulfate producing adenosine 5'-phosphosulfate (APS) and diphosphate, the first enzymatic step in sulfur assimilation pathway. APS synthesis involves the formation of a high-energy phosphoric-sulfuric acid anhydride bond driven by GTP hydrolysis by CysN coupled to ATP hydrolysis by CysD. This Hahella chejuensis (strain KCTC 2396) protein is Sulfate adenylyltransferase subunit 2.